Reading from the N-terminus, the 312-residue chain is MKKAIYLLILCIFGLFSVYFTYAENISDISNTTSKNISSSNISHNNIIYSNINYNEILYIIVKNNTAYVKDVINGTNNPYHIKSAGIILYEKIYGYNYSNLLYRNSSNSLIFYYNFSVDKINYTINITIPQIEDYVGSLGGPIRMRIPPNNVKIIIVAENKLAETNGKYILEYNKTDKKVISLIYLDNVSSICNIYYTKFFNSSEFYGYAVANVTSITENRTSYTIKNPKGTFTFDRKYNVFVSNKTAYLKEPYLYVKLYNSTIDDIIILENNKISENSTKFMSNYLLSFIGIIIGFGIIGLAIYLSKRGRK.

The next 2 membrane-spanning stretches (helical) occupy residues 4-24 (AIYL…TYAE) and 286-306 (YLLS…AIYL).

Its subcellular location is the cell membrane. This is an uncharacterized protein from Methanocaldococcus jannaschii (strain ATCC 43067 / DSM 2661 / JAL-1 / JCM 10045 / NBRC 100440) (Methanococcus jannaschii).